The following is a 702-amino-acid chain: Polyribonucleotide nucleotidyltransferase (702 aa).

Mg(2+) contacts are provided by Asp-486 and Asp-492. One can recognise a KH domain in the interval 553–612; it reads PSMATIKIDPEKIRDVIGKGGATIRSITEQTGASIDLDDDGTVRIYAADKASSDAALLKI. The S1 motif domain occupies 622–690; sequence DKLYKGKVVR…ARGRIKLSMK (69 aa).

It belongs to the polyribonucleotide nucleotidyltransferase family. In terms of assembly, component of the RNA degradosome, which is a multiprotein complex involved in RNA processing and mRNA degradation. It depends on Mg(2+) as a cofactor.

It localises to the cytoplasm. It carries out the reaction RNA(n+1) + phosphate = RNA(n) + a ribonucleoside 5'-diphosphate. In terms of biological role, involved in mRNA degradation. Catalyzes the phosphorolysis of single-stranded polyribonucleotides processively in the 3'- to 5'-direction. The polypeptide is Polyribonucleotide nucleotidyltransferase (Marinomonas sp. (strain MWYL1)).